Consider the following 206-residue polypeptide: Small ribosomal subunit protein uS4 (206 aa).

One can recognise an S4 RNA-binding domain in the interval 96–156; sequence GRLDNVVYRM…EKSKKQARIK (61 aa).

This sequence belongs to the universal ribosomal protein uS4 family. In terms of assembly, part of the 30S ribosomal subunit. Contacts protein S5. The interaction surface between S4 and S5 is involved in control of translational fidelity.

Functionally, one of the primary rRNA binding proteins, it binds directly to 16S rRNA where it nucleates assembly of the body of the 30S subunit. In terms of biological role, with S5 and S12 plays an important role in translational accuracy. In Glaesserella parasuis serovar 5 (strain SH0165) (Haemophilus parasuis), this protein is Small ribosomal subunit protein uS4.